Reading from the N-terminus, the 689-residue chain is 7SK snRNA methylphosphate capping enzyme (689 aa).

Met1 bears the N-acetylmethionine mark. Residues 1–10 (MIEMAAEKEP) are compositionally biased toward basic and acidic residues. The interval 1-167 (MIEMAAEKEP…GGGGFKHPAF (167 aa)) is disordered. Positions 52–84 (GRCAPSAGSPAAAVGRESPGAAATSSSGPQAQQ) are enriched in low complexity. Phosphoserine is present on residues Ser57, Ser60, Ser69, and Ser101. Arg117 carries the omega-N-methylarginine modification. Phosphoserine occurs at positions 152, 175, and 179. Thr213 carries the post-translational modification Phosphothreonine. A phosphoserine mark is found at Ser216, Ser217, and Ser254. Basic residues predominate over residues 258–269 (TGRKRHRHRGQH). The segment at 258 to 314 (TGRKRHRHRGQHHQQQQAAGGSESHPVPPTAPLTPLLHGEGASQQPRHRGQNRDAPQ) is disordered. Position 291 is a phosphothreonine (Thr291). Residues Ser330 and Ser344 each carry the phosphoserine modification. Residues 332–407 (LPSALQGPSG…HHPLPAAGFK (76 aa)) are disordered. Over residues 338 to 359 (GPSGSLSAPPAASVISAPPSSS) the composition is skewed to low complexity. The segment covering 360 to 369 (SRHRKRRRTS) has biased composition (basic residues). Ser390 carries the post-translational modification Phosphoserine. S-adenosyl-L-methionine-binding positions include Tyr422, Arg433, 451-453 (GCN), 474-475 (DI), 559-560 (NY), and Leu581. Residues 431 to 686 (DGRLRVLKPE…PVYLFHKARS (256 aa)) enclose the Bin3-type SAM domain. Residue Lys643 forms a Glycyl lysine isopeptide (Lys-Gly) (interchain with G-Cter in SUMO2) linkage.

Belongs to the methyltransferase superfamily. Core component of the 7SK RNP complex, at least composed of 7SK RNA, LARP7, MEPCE, HEXIM1 (or HEXIM2) and P-TEFb (composed of CDK9 and CCNT1/cyclin-T1). Interacts with METTL16. Interacts with RBM7; upon genotoxic stress this interaction is enhanced, triggering the release of inactive P-TEFb complex from the core, yielding to P-TEFb complex activation. Post-translationally, dephosphorylated at Ser-152 by the PNUTS-PP1 complex, promoting RNA polymerase II transcription pause-release. Expressed in chronic myeloid leukemia cells, adrenal gland, brain, cerebellum, kidney, lung, mammary gland and testis. Weakly or not expressed in other tissues.

The protein resides in the nucleus. It carries out the reaction a 5'-end triphospho-guanosine-ribonucleotide-snRNA + S-adenosyl-L-methionine = a 5'-end methyltriphosphate-guanosine-ribonucleotide-snRNA + S-adenosyl-L-homocysteine. S-adenosyl-L-methionine-dependent methyltransferase that adds a methylphosphate cap at the 5'-end of 7SK snRNA (7SK RNA), leading to stabilize it. Also has a non-enzymatic function as part of the 7SK RNP complex: the 7SK RNP complex sequesters the positive transcription elongation factor b (P-TEFb) in a large inactive 7SK RNP complex preventing RNA polymerase II phosphorylation and subsequent transcriptional elongation. The 7SK RNP complex also promotes snRNA gene transcription by RNA polymerase II via interaction with the little elongation complex (LEC). In the 7SK RNP complex, MEPCE is required to stabilize 7SK RNA and facilitate the assembly of 7SK RNP complex. MEPCE has a non-enzymatic function in the 7SK RNP complex; interaction with LARP7 within the 7SK RNP complex occluding its catalytic center. Also required for stability of U6 snRNAs. This chain is 7SK snRNA methylphosphate capping enzyme, found in Homo sapiens (Human).